Reading from the N-terminus, the 340-residue chain is Ketol-acid reductoisomerase (NADP(+)) (340 aa).

The region spanning 1–183 (MAITVYYDKD…GGGRTGIIET (183 aa)) is the KARI N-terminal Rossmann domain. NADP(+) is bound by residues 26-29 (FGSQ), R49, S52, S54, and 84-87 (DEIQ). H109 is an active-site residue. G135 serves as a coordination point for NADP(+). The KARI C-terminal knotted domain occupies 184–329 (TFKAETETDL…RNLRAMMPWI (146 aa)). D192, E196, E228, and E232 together coordinate Mg(2+). Residue S253 participates in substrate binding.

The protein belongs to the ketol-acid reductoisomerase family. Mg(2+) serves as cofactor.

The catalysed reaction is (2R)-2,3-dihydroxy-3-methylbutanoate + NADP(+) = (2S)-2-acetolactate + NADPH + H(+). The enzyme catalyses (2R,3R)-2,3-dihydroxy-3-methylpentanoate + NADP(+) = (S)-2-ethyl-2-hydroxy-3-oxobutanoate + NADPH + H(+). It participates in amino-acid biosynthesis; L-isoleucine biosynthesis; L-isoleucine from 2-oxobutanoate: step 2/4. The protein operates within amino-acid biosynthesis; L-valine biosynthesis; L-valine from pyruvate: step 2/4. In terms of biological role, involved in the biosynthesis of branched-chain amino acids (BCAA). Catalyzes an alkyl-migration followed by a ketol-acid reduction of (S)-2-acetolactate (S2AL) to yield (R)-2,3-dihydroxy-isovalerate. In the isomerase reaction, S2AL is rearranged via a Mg-dependent methyl migration to produce 3-hydroxy-3-methyl-2-ketobutyrate (HMKB). In the reductase reaction, this 2-ketoacid undergoes a metal-dependent reduction by NADPH to yield (R)-2,3-dihydroxy-isovalerate. This is Ketol-acid reductoisomerase (NADP(+)) from Campylobacter jejuni (strain RM1221).